We begin with the raw amino-acid sequence, 353 residues long: Photosystem II D2 protein (353 aa).

An N-acetylthreonine modification is found at threonine 2. Phosphothreonine is present on threonine 2. The chain crosses the membrane as a helical span at residues 41-61; sequence CAYFAVGGWFTGTTFVTSWYT. Histidine 118 contacts chlorophyll a. A helical membrane pass occupies residues 125–141; sequence GFMLRQFELARSVQLRP. Pheophytin a contacts are provided by glutamine 130 and asparagine 143. A helical transmembrane segment spans residues 153–166; the sequence is VFVSVFLIYPLGQS. Histidine 198 contributes to the chlorophyll a binding site. Residues 208-228 traverse the membrane as a helical segment; it reads AALLCAIHGATVENTLFEDGD. A plastoquinone contacts are provided by histidine 215 and phenylalanine 262. Histidine 215 contributes to the Fe cation binding site. A Fe cation-binding site is contributed by histidine 269. The chain crosses the membrane as a helical span at residues 279-295; the sequence is GLWMSALGVVGLALNLR.

This sequence belongs to the reaction center PufL/M/PsbA/D family. In terms of assembly, PSII is composed of 1 copy each of membrane proteins PsbA, PsbB, PsbC, PsbD, PsbE, PsbF, PsbH, PsbI, PsbJ, PsbK, PsbL, PsbM, PsbT, PsbX, PsbY, PsbZ, Psb30/Ycf12, at least 3 peripheral proteins of the oxygen-evolving complex and a large number of cofactors. It forms dimeric complexes. The D1/D2 heterodimer binds P680, chlorophylls that are the primary electron donor of PSII, and subsequent electron acceptors. It shares a non-heme iron and each subunit binds pheophytin, quinone, additional chlorophylls, carotenoids and lipids. There is also a Cl(-1) ion associated with D1 and D2, which is required for oxygen evolution. The PSII complex binds additional chlorophylls, carotenoids and specific lipids. is required as a cofactor.

The protein resides in the plastid. It is found in the chloroplast thylakoid membrane. It catalyses the reaction 2 a plastoquinone + 4 hnu + 2 H2O = 2 a plastoquinol + O2. Functionally, photosystem II (PSII) is a light-driven water:plastoquinone oxidoreductase that uses light energy to abstract electrons from H(2)O, generating O(2) and a proton gradient subsequently used for ATP formation. It consists of a core antenna complex that captures photons, and an electron transfer chain that converts photonic excitation into a charge separation. The D1/D2 (PsbA/PsbD) reaction center heterodimer binds P680, the primary electron donor of PSII as well as several subsequent electron acceptors. D2 is needed for assembly of a stable PSII complex. The sequence is that of Photosystem II D2 protein from Cucumis sativus (Cucumber).